The chain runs to 164 residues: Transmembrane protein B169L (164 aa).

A run of 2 helical transmembrane segments spans residues 28–48 and 60–80; these read NPFI…FAIC and TAIY…YVLN. N88 carries an N-linked (GlcNAc...) asparagine; by host glycan. The tract at residues 114 to 142 is disordered; sequence SPPSVPDELEEDRPKMIPAGSKPADFKPA.

Belongs to the asfivirus B169L family.

The protein resides in the host membrane. Its subcellular location is the virion. The sequence is that of Transmembrane protein B169L from Ornithodoros (relapsing fever ticks).